A 294-amino-acid chain; its full sequence is Cell division protein FtsQ (294 aa).

Residues 1 to 26 lie on the Cytoplasmic side of the membrane; sequence MARGPNRRRVDRVPGERRRRLARAMA. Residues 27-49 form a helical membrane-spanning segment; sequence LALPSILALAALGGAATLGWRVG. Residues 50–294 are Periplasmic-facing; the sequence is WKSDLLRVRE…GPQGRSSSLR (245 aa). A POTRA domain is found at 55–123; sequence LRVREIRFEG…PALEVQLAER (69 aa). The tract at residues 266–294 is disordered; it reads AGRRGEPDGRSSYAAGGGGGPQGRSSSLR.

Belongs to the FtsQ/DivIB family. FtsQ subfamily.

It is found in the cell inner membrane. In terms of biological role, essential cell division protein. The chain is Cell division protein FtsQ from Anaeromyxobacter sp. (strain K).